The primary structure comprises 414 residues: Serine hydroxymethyltransferase (414 aa).

Residues Leu116 and Gly120 to Leu122 contribute to the (6S)-5,6,7,8-tetrahydrofolate site. Lys225 is modified (N6-(pyridoxal phosphate)lysine). Residue Ser349–Phe351 participates in (6S)-5,6,7,8-tetrahydrofolate binding.

The protein belongs to the SHMT family. Homodimer. Pyridoxal 5'-phosphate is required as a cofactor.

The protein localises to the cytoplasm. It catalyses the reaction (6R)-5,10-methylene-5,6,7,8-tetrahydrofolate + glycine + H2O = (6S)-5,6,7,8-tetrahydrofolate + L-serine. It participates in one-carbon metabolism; tetrahydrofolate interconversion. It functions in the pathway amino-acid biosynthesis; glycine biosynthesis; glycine from L-serine: step 1/1. Catalyzes the reversible interconversion of serine and glycine with tetrahydrofolate (THF) serving as the one-carbon carrier. This reaction serves as the major source of one-carbon groups required for the biosynthesis of purines, thymidylate, methionine, and other important biomolecules. Also exhibits THF-independent aldolase activity toward beta-hydroxyamino acids, producing glycine and aldehydes, via a retro-aldol mechanism. In Oenococcus oeni (strain ATCC BAA-331 / PSU-1), this protein is Serine hydroxymethyltransferase.